The chain runs to 196 residues: Protein hunchback (196 aa).

3 disordered regions span residues 16-56 (SHHH…SHTN), 63-82 (LKQQ…QQPM), and 156-196 (LTPP…KYMA). The segment covering 17–29 (HHHHHHHAHHSHH) has biased composition (basic residues). Composition is skewed to low complexity over residues 33 to 43 (SNSNASNSPHQ) and 65 to 80 (QQQQ…QQQQ). Over residues 177 to 196 (EPEKEHDLMSNSSEDMKYMA) the composition is skewed to basic and acidic residues.

This sequence belongs to the hunchback C2H2-type zinc-finger protein family.

Its subcellular location is the nucleus. Functionally, gap class segmentation protein that controls development of head structures. This is Protein hunchback (hb) from Drosophila adunca (Fruit fly).